We begin with the raw amino-acid sequence, 334 residues long: Phosphate acyltransferase (334 aa).

Belongs to the PlsX family. As to quaternary structure, homodimer. Probably interacts with PlsY.

It localises to the cytoplasm. It carries out the reaction a fatty acyl-[ACP] + phosphate = an acyl phosphate + holo-[ACP]. It functions in the pathway lipid metabolism; phospholipid metabolism. Functionally, catalyzes the reversible formation of acyl-phosphate (acyl-PO(4)) from acyl-[acyl-carrier-protein] (acyl-ACP). This enzyme utilizes acyl-ACP as fatty acyl donor, but not acyl-CoA. The protein is Phosphate acyltransferase of Thermotoga petrophila (strain ATCC BAA-488 / DSM 13995 / JCM 10881 / RKU-1).